The following is a 215-amino-acid chain: ATP phosphoribosyltransferase (215 aa).

Belongs to the ATP phosphoribosyltransferase family. Short subfamily. Heteromultimer composed of HisG and HisZ subunits.

It is found in the cytoplasm. The catalysed reaction is 1-(5-phospho-beta-D-ribosyl)-ATP + diphosphate = 5-phospho-alpha-D-ribose 1-diphosphate + ATP. The protein operates within amino-acid biosynthesis; L-histidine biosynthesis; L-histidine from 5-phospho-alpha-D-ribose 1-diphosphate: step 1/9. In terms of biological role, catalyzes the condensation of ATP and 5-phosphoribose 1-diphosphate to form N'-(5'-phosphoribosyl)-ATP (PR-ATP). Has a crucial role in the pathway because the rate of histidine biosynthesis seems to be controlled primarily by regulation of HisG enzymatic activity. This is ATP phosphoribosyltransferase from Gloeothece citriformis (strain PCC 7424) (Cyanothece sp. (strain PCC 7424)).